We begin with the raw amino-acid sequence, 111 residues long: Protein 0.6B (111 aa).

Positions 82 to 111 (LERRKDKRGRRGIDERKRLKPRNSPHLNRH) are disordered. Over residues 99–111 (RLKPRNSPHLNRH) the composition is skewed to basic residues.

The chain is Protein 0.6B (0.6A) from Escherichia coli (Bacteriophage T7).